The sequence spans 436 residues: MLDIKYLRKNVAEATRRLQDRGIESEKLTTLLSLDKARREAIQQVESLKAQRNEVSDKIAYAKRNKTDASEAILAMQEVGSKIKALDARQASLDMEVKNLAAHLPNLAASDVPVGPDEAANVEQRVWEPKTYGQRLKAHQEAPEWLKAHYEVGETLGILDFERGAKVSGARFLYYVGDGARLERAVYNFMLDEHRQEGYTEMITPIVVNDAAMFGTGQYPKFQDDAYRVEGLEQTYIPTAEVPLTNYYSGETLPAEDLPIKFTALSPSFRKEAGAAGKDTRGLIRLHQFNKVEMVKFTKPEQSYEELESMTANAENILQKLGLPYHVIMLSTGDMGFSAAKTYDVEVWMPQQQVYREISSVSNTEDFQARRMHITYRNEAGQLALVHTLNGSGLAVGRTVAAILENYQNPDGSVTVPEVLRPYLGGQDKLMATPHH.

T239–E241 is a binding site for L-serine. R270–E272 contributes to the ATP binding site. An L-serine-binding site is contributed by E293. E357–S360 lines the ATP pocket. S392 is an L-serine binding site.

It belongs to the class-II aminoacyl-tRNA synthetase family. Type-1 seryl-tRNA synthetase subfamily. As to quaternary structure, homodimer. The tRNA molecule binds across the dimer.

The protein localises to the cytoplasm. The catalysed reaction is tRNA(Ser) + L-serine + ATP = L-seryl-tRNA(Ser) + AMP + diphosphate + H(+). It catalyses the reaction tRNA(Sec) + L-serine + ATP = L-seryl-tRNA(Sec) + AMP + diphosphate + H(+). The protein operates within aminoacyl-tRNA biosynthesis; selenocysteinyl-tRNA(Sec) biosynthesis; L-seryl-tRNA(Sec) from L-serine and tRNA(Sec): step 1/1. In terms of biological role, catalyzes the attachment of serine to tRNA(Ser). Is also able to aminoacylate tRNA(Sec) with serine, to form the misacylated tRNA L-seryl-tRNA(Sec), which will be further converted into selenocysteinyl-tRNA(Sec). This Leuconostoc citreum (strain KM20) protein is Serine--tRNA ligase.